The following is a 685-amino-acid chain: Protein argonaute (685 aa).

The interval 1-99 is N-terminal domain; that stretch reads MNHLGKTEVF…LYPKGRRPLD (99 aa). The linker L1 stretch occupies residues 100–176; sequence PKDPGERSVL…VDPAYRILCE (77 aa). In terms of domain architecture, PAZ spans 169-265; the sequence is PAYRILCEMS…HLTGLLVPVL (97 aa). Residues 272 to 337 are linker L2; it reads EEEGSLALSL…SKPADALRVG (66 aa). Positions 338-463 are mid domain; the sequence is FYRAQETALA…LLAKAGLQVV (126 aa). Residues 464-685 form a PIWI domain region; the sequence is ALSGAYPAEL…EVDREKLFFV (222 aa). Catalysis depends on residues D478, E512, D546, and D660. D478 lines the Mn(2+) pocket. A Piwi domain is found at 507-671; that stretch reads EAQAGERIPQ…LVKEVGRLGI (165 aa). Mn(2+)-binding residues include D546, D660, and V685.

It belongs to the argonaute family. Long pAgo subfamily. Coimmunoprecipitates with a number of proteins involved in DNA replication or recombination including RepA (initiates replication), AddA/B (TT_C0638 and TT_C0639), ArgR, GyrA/B, HU (TT_C0984), PriA, Rad52 (TT_C1923), RecJ, SSB, TopA and UvrB. Most proteins remain associated with TtAgo after DNase treatment and associate with catalytically inactive protein. Mn(2+) serves as cofactor.

Its function is as follows. A DNA-guided ssDNA endonuclease. Uses short ssDNA sequences as guides (gDNA, also called small interfering DNA, siDNA) to bind complementary DNA target strands, resulting in cleavage of the target DNA (tDNA). The cleavage site is 10 nucleotides (nt) downstream of the target residue base-paired with the 5'-end of the gDNA. Plays a role in completion of DNA replication, participates in decatenating replicated DNA and plasmid. In situ purifies with 5'-phosphorylated long DNA (about 1160 nt, maps to the whole chromosome and plasmid), 25-35 nt RNAs that map to the whole chromosome and 15-18 nt DNA that maps to the replication terminus region (ter) on the chromosome and plasmid. Most short DNA starts with dC. Has been shown to have guide sequence-independent dsDNase activity called 'chopping', which requires unstable DNA (high AT-content, multiple mismatches or low salt conditions), and could be used to generate gDNA. Preferentially binds tDNA with dC at its 3'-terminus. Has also been shown to have no detectable guide sequence-independent dsDNase activity. The latter study proposes TtAgo may acquire gDNA from nicked dsDNA, by binding to 5'-phosphorylated-dC nicks, then cleaving 10 nt away on the opposite strand; subsequently an exonuclease (maybe AddA-AddB helicase/nuclease) trims the ends to generate the gDNA. Functionally, involved in defense against invading mobile genetic elements. TtAgo interferes with plasmid DNA, stimulates expression of specific endogenous genes, including various CRISPR loci and at least part of the CRISPR adaptation machinery, but only when exogenous plasmid DNA is present. Upon purification from E.coli associates with gDNA 13-25 nt long with 5'-phosphorylated ends and with 10-150 nt RNA with 5'-OH. DNA corresponds to the expression plasmid rather than chromosomal DNA; 89% of gDNA starts with dC and 72% has dA in the second position. Endonucleolytically cleaves tDNA with 5'-phosphorylated gDNA but not 5'-phosphorylated gRNA; the active site is involved in processing or binding of ssDNA. Nicks or linearizes supercoiled plasmid target when it has the appropriate gDNA sequences, does not cleave linear tDNA. Positions 4 to 16 of the tDNA need to be base paired to the gDNA for efficient tDNA cleavage. Although the system can support single nucleotide insertions in either the gDNA or tDNA, in all cases cleavage activity is reduced, with a wide range of sequence- and position-specific effects. First characterized as a DNA-guided RNA endonuclease. Uses gDNA to bind complementary RNA target strands, resulting in cleavage of the target RNA. The cleavage site is 10 nucleotides (nt) downstream of the target residue base-paired with the 5'-end of the guide DNA. This is Protein argonaute from Thermus thermophilus (strain ATCC BAA-163 / DSM 7039 / HB27).